The following is a 425-amino-acid chain: Serine--tRNA ligase (425 aa).

230–232 (TAE) is an L-serine binding site. Residue 261 to 263 (RSE) coordinates ATP. Glutamate 284 is an L-serine binding site. An ATP-binding site is contributed by 348-351 (EISS). An L-serine-binding site is contributed by serine 384.

This sequence belongs to the class-II aminoacyl-tRNA synthetase family. Type-1 seryl-tRNA synthetase subfamily. In terms of assembly, homodimer. The tRNA molecule binds across the dimer.

It localises to the cytoplasm. It carries out the reaction tRNA(Ser) + L-serine + ATP = L-seryl-tRNA(Ser) + AMP + diphosphate + H(+). The enzyme catalyses tRNA(Sec) + L-serine + ATP = L-seryl-tRNA(Sec) + AMP + diphosphate + H(+). It functions in the pathway aminoacyl-tRNA biosynthesis; selenocysteinyl-tRNA(Sec) biosynthesis; L-seryl-tRNA(Sec) from L-serine and tRNA(Sec): step 1/1. Functionally, catalyzes the attachment of serine to tRNA(Ser). Is also able to aminoacylate tRNA(Sec) with serine, to form the misacylated tRNA L-seryl-tRNA(Sec), which will be further converted into selenocysteinyl-tRNA(Sec). This Streptococcus pyogenes serotype M49 (strain NZ131) protein is Serine--tRNA ligase.